The primary structure comprises 128 residues: Cytochrome c-type biogenesis protein CcmE (128 aa).

Over 1-8 the chain is Cytoplasmic; it reads MQKRVRNR. Residues 9 to 29 traverse the membrane as a helical; Signal-anchor for type II membrane protein segment; the sequence is LITIIICFCSAFLGISIILYN. At 30–128 the chain is on the periplasmic side; the sequence is LEKNIVFFLP…KHDENYRPPQ (99 aa). Heme is bound by residues H120 and Y124.

This sequence belongs to the CcmE/CycJ family.

Its subcellular location is the cell inner membrane. Its function is as follows. Heme chaperone required for the biogenesis of c-type cytochromes. Transiently binds heme delivered by CcmC and transfers the heme to apo-cytochromes in a process facilitated by CcmF and CcmH. In Rickettsia rickettsii (strain Iowa), this protein is Cytochrome c-type biogenesis protein CcmE.